The sequence spans 403 residues: G2/mitotic-specific cyclin-B3 (403 aa).

Disordered stretches follow at residues 1–86 and 102–122; these read MPVA…APPA and RKTP…PEEP. The span at 7 to 25 shows a compositional bias: polar residues; sequence SKAQSSKQPRASKAPSVTE. The D-box signature appears at 51-59; sequence RSAFGDITN.

It belongs to the cyclin family. Cyclin AB subfamily. In terms of assembly, interacts with the CDK1 and CDK2 protein kinases. In terms of processing, ubiquitinated, leading to its degradation.

The protein resides in the nucleus. Functionally, cyclins are positive regulatory subunits of the cyclin-dependent kinases (CDKs), and thereby play an essential role in the control of the cell cycle, notably via their destruction during cell division. Could be involved at the G2/M (mitosis or meiosis) transition. G2/M cyclins accumulate steadily during G2 and are abruptly destroyed at mitosis. The chain is G2/mitotic-specific cyclin-B3 (CCNB3) from Gallus gallus (Chicken).